We begin with the raw amino-acid sequence, 71 residues long: Dermaseptin-PT9 (71 aa).

Positions 1–22 are cleaved as a signal peptide; the sequence is MAFLKKSLFLVLFLGLVSLSIC. A propeptide spanning residues 23–43 is cleaved from the precursor; that stretch reads EEEKRENEMEQEDDEQSEMKR. V68 is subject to Valine amide. The propeptide occupies 69 to 71; it reads GEQ.

Belongs to the frog skin active peptide (FSAP) family. Dermaseptin subfamily. As to expression, expressed by the skin glands.

It localises to the secreted. The protein resides in the target cell membrane. Antimicrobial peptide with activity against fungi, Gram-positive and Gram-negative bacteria. Is active against S.aureus (MIC=16 uM), MRSA (MIC=32 uM), E.faecalis (MIC=16 uM), E.coli (MIC=8 uM), P.aeruginosa (MIC=16 uM), K.pneumoniae (MIC=8 uM), and C.albicans (MIC=64 uM). Also inhibits biofilm formation. Acts by disrupting cell membranes. Also exhibits anti-proliferative effect against various human cancer cells. Shows weak hemolytic activity towards horse erythrocytes. The sequence is that of Dermaseptin-PT9 from Phyllomedusa tarsius (Brownbelly leaf frog).